Reading from the N-terminus, the 2850-residue chain is Hornerin (2850 aa).

The tract at residues 1–81 is S-100-like; sequence MPKLLQGVIT…TEYLLMIFKL (81 aa). EF-hand domains are found at residues 13 to 48 and 49 to 84; these read DVFY…LKNP and NDPD…LVQA. Residues T27, E32, D62, D64, N66, K68, and E73 each contribute to the Ca(2+) site. Tandem repeats lie at residues 97–187, 188–278, 279–369, 370–460, 474–566, 593–683, 685–747, 748–836, 839–875, 876–965, 966–1004, 1007–1097, and 1098–1188. A compositionally biased stretch (basic and acidic residues) spans 100-110; it reads KLRDDTHQHQE. 2 disordered regions span residues 100 to 154 and 166 to 2817; these read KLRD…GTES and SGQH…KGGS. Polar residues predominate over residues 125–144; sequence SSFSHSSWSAGENDSYSRNV. 2 stretches are compositionally biased toward low complexity: residues 167–192 and 226–248; these read GQHN…SSGR and GQSS…SQHG. The segment covering 249–259 has biased composition (gly residues); the sequence is SGSGHSSGYGQ. Low complexity-rich tracts occupy residues 276-308 and 317-421; these read SSGS…QSPS and GHSS…SGSG. Residues 422–433 show a composition bias toward gly residues; the sequence is QSPGHGQRGSGS. Composition is skewed to low complexity over residues 449–465 and 473–482; these read SSSS…SSGF and EHSSGYTQHG. The span at 483 to 493 shows a compositional bias: gly residues; sequence SGSGHSSGHGQ. Low complexity-rich tracts occupy residues 494 to 529, 555 to 661, 670 to 724, 732 to 765, 782 to 806, and 818 to 871; these read HGSR…QSLG, SSSY…QSPS, GHSS…SHSS, RSGQ…SSGH, GSSS…SCGH, and GQHE…GQHE. A phosphoserine mark is found at S659 and S661. Positions 884–900 are enriched in gly residues; it reads GSGSGQSPGHGQRGSGS. At S890 the chain carries Phosphoserine. 2 stretches are compositionally biased toward low complexity: residues 901–921 and 931–996; these read GQSP…SSGR and GFGH…SLGH. Phosphoserine occurs at positions 993 and 1008. 2 stretches are compositionally biased toward low complexity: residues 1019 to 1050 and 1057 to 1115; these read GQSS…SSGL and SGQS…SSGY. Residues 1116–1132 show a composition bias toward gly residues; it reads GRQGSGSGQSPGHGQRG. 2 stretches are compositionally biased toward low complexity: residues 1133–1156 and 1166–1184; these read SGSR…SSGQ and GFGH…SQHG. Residues 1185-1195 are compositionally biased toward gly residues; the sequence is SGSGHSSGYGQ. Omega-N-methylarginine is present on R1205. Composition is skewed to low complexity over residues 1211-1232 and 1253-1276; these read SSSG…SSGH and GHSS…PYES. Repeat unit 14 spans residues 1215–1305; that stretch reads SSSHYGQHGS…AYSQHGSGSG (91 aa). The segment covering 1280–1301 has biased composition (polar residues); it reads HSSVFGQHESGSGHSSAYSQHG. Composition is skewed to low complexity over residues 1309-1322, 1331-1349, 1370-1390, 1400-1438, and 1445-1466; these read SQGQ…QSST, GQSS…SSGY, GHSS…SSGR, GFGH…GQSS, and SSSG…SLGH. 16 consecutive repeat copies span residues 1332–1422, 1423–1474, 1477–1567, 1568–1658, 1685–1775, 1802–1892, 1893–1944, 1947–2037, 2038–2128, 2155–2245, 2272–2362, 2363–2414, 2417–2507, 2508–2598, 2625–2715, and 2716–2806. Phosphoserine is present on residues S1463 and S1478. 2 stretches are compositionally biased toward low complexity: residues 1489–1520 and 1527–1585; these read GQSS…SSGL and SGQS…SSGY. Positions 1586-1602 are enriched in gly residues; that stretch reads GRQGSGSGQSPGHGQRG. 2 stretches are compositionally biased toward low complexity: residues 1603 to 1626 and 1636 to 1654; these read SGSR…SSGQ and GFGH…SQHG. The segment covering 1655-1665 has biased composition (gly residues); it reads SGSGHSSGYGQ. Over residues 1682-1702 the composition is skewed to low complexity; sequence SSRSSSRYGQHGSGSRQSSGH. Phosphoserine is present on residues S1712 and S1714. Positions 1723-1746 are enriched in low complexity; it reads GHSSSHGQHGSGSGRSSSRGPYES. Residues 1750–1771 show a composition bias toward polar residues; it reads HSSVFGQHESGSGHSSAYSQHG. Low complexity-rich tracts occupy residues 1779–1831, 1840–1860, and 1870–1936; these read SQGQ…QSPS, GHSS…SSGR, and GFGH…SLGH. Phosphoserine is present on residues S1829 and S1831. Phosphoserine is present on residues S1933 and S1948. Low complexity-rich tracts occupy residues 1959–1990 and 1997–2055; these read GQSS…SSGL and SGQS…SSGY. A compositionally biased stretch (gly residues) spans 2056 to 2072; that stretch reads GRQGSGSGQSPGHGQRG. Low complexity-rich tracts occupy residues 2073–2096 and 2106–2124; these read SGSR…SSGQ and GFGH…SQHG. Residues 2125–2135 are compositionally biased toward gly residues; that stretch reads SGSGHSSGYGQ. Low complexity-rich tracts occupy residues 2151–2172 and 2193–2216; these read SSSG…SSGH and GHSS…PYES. The segment covering 2220–2241 has biased composition (polar residues); that stretch reads HSSVFGQHESGSGHSSAYSQHG. 4 stretches are compositionally biased toward low complexity: residues 2249–2301, 2310–2330, 2340–2378, and 2385–2406; these read SQGQ…QSPS, GHSS…SSGR, GFGH…GQSS, and SSSG…SLGH. S2299 and S2301 each carry phosphoserine. A phosphoserine mark is found at S2403 and S2418. 2 stretches are compositionally biased toward low complexity: residues 2429–2460 and 2467–2525; these read GQSS…SSGL and SGQS…SSGY. Gly residues predominate over residues 2526 to 2542; the sequence is GRQGSGSGQSPGHGQRG. Composition is skewed to low complexity over residues 2543–2566 and 2576–2594; these read SGSR…SSGQ and GFGH…SQHG. A compositionally biased stretch (gly residues) spans 2595-2605; that stretch reads SGSGHSSGYGQ. Over residues 2621-2642 the composition is skewed to low complexity; it reads SSSGSSSHYGQHGSGSRQSSGH. Residues S2652 and S2654 each carry the phosphoserine modification. The span at 2663–2682 shows a compositional bias: low complexity; the sequence is GHSSSHGQHGSGSGRSSSRG. The segment covering 2698–2711 has biased composition (polar residues); that stretch reads ESGSGHSSAYSQHG. Low complexity-rich tracts occupy residues 2719-2732, 2741-2759, and 2795-2816; these read SQGQ…QSST, GQSS…SSGY, and SSGY…CKGG.

This sequence belongs to the S100-fused protein family. The protein in the N-terminal section; belongs to the S-100 family. Processed during the process of epidermal differentiation. In terms of processing, forms covalent cross-links mediated by transglutaminase TGM3, between glutamine and the epsilon-amino group of lysine residues (in vitro). As to expression, expressed in cornified epidermis, psoriatic and regenerating skin after wounding. Found in the upper granular layer and in the entire cornified layer of epidermis.

The protein localises to the cytoplasmic granule. Functionally, component of the epidermal cornified cell envelopes. The polypeptide is Hornerin (HRNR) (Homo sapiens (Human)).